A 315-amino-acid polypeptide reads, in one-letter code: tRNA dimethylallyltransferase (315 aa).

13-20 (GPTASGKS) is an ATP binding site. Residue 15 to 20 (TASGKS) participates in substrate binding. Interaction with substrate tRNA regions lie at residues 38 to 41 (DSMQ) and 162 to 166 (QRLAR).

This sequence belongs to the IPP transferase family. In terms of assembly, monomer. The cofactor is Mg(2+).

It carries out the reaction adenosine(37) in tRNA + dimethylallyl diphosphate = N(6)-dimethylallyladenosine(37) in tRNA + diphosphate. Catalyzes the transfer of a dimethylallyl group onto the adenine at position 37 in tRNAs that read codons beginning with uridine, leading to the formation of N6-(dimethylallyl)adenosine (i(6)A). The polypeptide is tRNA dimethylallyltransferase (Paramagnetospirillum magneticum (strain ATCC 700264 / AMB-1) (Magnetospirillum magneticum)).